The chain runs to 179 residues: B-cell acute lymphoblastic leukemia-expressed protein (179 aa).

Disordered regions lie at residues 1 to 20 (MMKD…TDLQ) and 65 to 86 (RDTP…RGKA). Over residues 10–20 (SWASEESTDLQ) the composition is skewed to polar residues.

The polypeptide is B-cell acute lymphoblastic leukemia-expressed protein (BLACE) (Homo sapiens (Human)).